The sequence spans 657 residues: ER degradation-enhancing alpha-mannosidase-like protein 1 (657 aa).

Residues 1–4 (MQWR) lie on the Cytoplasmic side of the membrane. Residues 5 to 25 (ALVLGLVLLRLGLHGVLWLVF) traverse the membrane as a helical; Signal-anchor for type II membrane protein segment. Residues 26 to 657 (GLGPSMGFYQ…RQIDQMVGLI (632 aa)) are Lumenal-facing. Residues 48-94 (SPDGPASPTSGPVGRPGGVSGPSWLQPPGTGAAQSPRKAPRRPGPGM) form a disordered region. N-linked (GlcNAc...) asparagine glycosylation is found at N181, N198, N299, N342, and N624.

Belongs to the glycosyl hydrolase 47 family. In terms of assembly, interacts with DNAJC10. Interacts with DERL2 and DERL3. Binds to SEL1L.

The protein localises to the endoplasmic reticulum membrane. In terms of biological role, extracts misfolded glycoproteins, but not glycoproteins undergoing productive folding, from the calnexin cycle. It is directly involved in endoplasmic reticulum-associated degradation (ERAD) and targets misfolded glycoproteins for degradation in an N-glycan-independent manner, probably by forming a complex with SEL1L. It has low mannosidase activity, catalyzing mannose trimming from Man8GlcNAc2 to Man7GlcNAc2. In Homo sapiens (Human), this protein is ER degradation-enhancing alpha-mannosidase-like protein 1 (EDEM1).